A 510-amino-acid polypeptide reads, in one-letter code: NAD(P)H-quinone oxidoreductase subunit 2, chloroplastic (510 aa).

The next 12 helical transmembrane spans lie at 24 to 44 (LLLFHGSFIFPECILIFGLIL), 59 to 79 (WFYFISSTSLIISITALLFRW), 99 to 119 (IFQFLILLCSTLCIPLSVEYI), 124 to 144 (MAITEFLLFVLTATLGGMFLC), 149 to 169 (LITIFVAPECFSLCSYLLSGY), 183 to 203 (YLLMGGASSSILVHGFSWLYG), 229 to 249 (ISIALISITVGIGFKLSPAPF), 295 to 315 (WHLLLEILAILSMILGNLIAI), 323 to 343 (MLAYSSIGQIGYVIIGIIVGD), 354 to 374 (YMLFYISMNLGTFACIVLFGL), 395 to 415 (ALSSALCLLSLGGLPPLAGFF), and 418 to 438 (LHLFWCGWQAGLYFLVSIGLL).

This sequence belongs to the complex I subunit 2 family. NDH is composed of at least 16 different subunits, 5 of which are encoded in the nucleus.

The protein resides in the plastid. It localises to the chloroplast thylakoid membrane. It carries out the reaction a plastoquinone + NADH + (n+1) H(+)(in) = a plastoquinol + NAD(+) + n H(+)(out). The enzyme catalyses a plastoquinone + NADPH + (n+1) H(+)(in) = a plastoquinol + NADP(+) + n H(+)(out). Functionally, NDH shuttles electrons from NAD(P)H:plastoquinone, via FMN and iron-sulfur (Fe-S) centers, to quinones in the photosynthetic chain and possibly in a chloroplast respiratory chain. The immediate electron acceptor for the enzyme in this species is believed to be plastoquinone. Couples the redox reaction to proton translocation, and thus conserves the redox energy in a proton gradient. This chain is NAD(P)H-quinone oxidoreductase subunit 2, chloroplastic, found in Ensete ventricosum (Abyssinian banana).